The sequence spans 294 residues: ATP synthase gamma chain (294 aa).

This sequence belongs to the ATPase gamma chain family. F-type ATPases have 2 components, CF(1) - the catalytic core - and CF(0) - the membrane proton channel. CF(1) has five subunits: alpha(3), beta(3), gamma(1), delta(1), epsilon(1). CF(0) has three main subunits: a, b and c.

The protein resides in the cell inner membrane. Its function is as follows. Produces ATP from ADP in the presence of a proton gradient across the membrane. The gamma chain is believed to be important in regulating ATPase activity and the flow of protons through the CF(0) complex. In Rhizobium leguminosarum bv. trifolii (strain WSM2304), this protein is ATP synthase gamma chain.